A 652-amino-acid polypeptide reads, in one-letter code: Acetyl-coenzyme A synthetase (652 aa).

CoA is bound by residues 191–194 (RAGR), T311, and N335. Residues 387–389 (GEP), 411–416 (DTWWQT), D500, and R515 each bind ATP. S523 contributes to the CoA binding site. An ATP-binding site is contributed by R526. V537, H539, and I542 together coordinate Mg(2+). CoA is bound at residue R584. The residue at position 609 (K609) is an N6-acetyllysine.

Belongs to the ATP-dependent AMP-binding enzyme family. It depends on Mg(2+) as a cofactor. In terms of processing, acetylated. Deacetylation by the SIR2-homolog deacetylase activates the enzyme.

It catalyses the reaction acetate + ATP + CoA = acetyl-CoA + AMP + diphosphate. In terms of biological role, catalyzes the conversion of acetate into acetyl-CoA (AcCoA), an essential intermediate at the junction of anabolic and catabolic pathways. Acs undergoes a two-step reaction. In the first half reaction, Acs combines acetate with ATP to form acetyl-adenylate (AcAMP) intermediate. In the second half reaction, it can then transfer the acetyl group from AcAMP to the sulfhydryl group of CoA, forming the product AcCoA. Its function is as follows. Enables the cell to use acetate during aerobic growth to generate energy via the TCA cycle, and biosynthetic compounds via the glyoxylate shunt. Acetylates CheY, the response regulator involved in flagellar movement and chemotaxis. In Salmonella typhi, this protein is Acetyl-coenzyme A synthetase.